Reading from the N-terminus, the 151-residue chain is Ribosome maturation factor RimP (151 aa).

The protein belongs to the RimP family.

The protein localises to the cytoplasm. Its function is as follows. Required for maturation of 30S ribosomal subunits. This Shewanella woodyi (strain ATCC 51908 / MS32) protein is Ribosome maturation factor RimP.